The primary structure comprises 203 residues: NAD(P)H dehydrogenase (quinone) (203 aa).

A Flavodoxin-like domain is found at 3-194; it reads VLIVYYSLYG…DAARFQGRHI (192 aa). Residues 9–14 and 82–84 contribute to the FMN site; these read SLYGHV and TRF. Tyrosine 11 provides a ligand contact to NAD(+). Tryptophan 102 is a substrate binding site. FMN-binding positions include 117 to 123 and histidine 138; that span reads STATQHG.

This sequence belongs to the WrbA family. FMN serves as cofactor.

The catalysed reaction is a quinone + NADH + H(+) = a quinol + NAD(+). The enzyme catalyses a quinone + NADPH + H(+) = a quinol + NADP(+). This is NAD(P)H dehydrogenase (quinone) from Solidesulfovibrio magneticus (strain ATCC 700980 / DSM 13731 / RS-1) (Desulfovibrio magneticus).